The sequence spans 453 residues: AP-4 complex subunit mu-1 (453 aa).

The MHD domain occupies K184 to R452. Positions P383–G403 are disordered.

Belongs to the adaptor complexes medium subunit family. As to quaternary structure, adaptor protein complex 4 (AP-4) is a heterotetramer composed of two large adaptins (epsilon-type subunit AP4E1 and beta-type subunit AP4B1), a medium adaptin (mu-type subunit AP4M1) and a small adaptin (sigma-type AP4S1). Interacts with tyrosine-based sorting signals on the cytoplasmic tail of cargo proteins such as APP, ATG9A, LAMP2 and NAGPA. Interacts with the C-terminal domain of GRID2. Interacts with GRIA1 and GRIA2; the interaction is indirect via CACNG3. Interacts with CACNG3; CACNG3 associates GRIA1 and GRIA2 with the adaptor protein complex 4 (AP-4) to target them to the somatodendritic compartment of neurons. Interacts with HOOK1 and HOOK2; the interactions are direct, mediate the interaction between FTS-Hook-FHIP (FHF) complex and AP-4 and the perinuclear distribution of AP-4. In terms of tissue distribution, high levels in the olfactory bulb, the cerebral cortex, the granule and Purkinje cell layers of the cerebellar cortex and the CA3 region of the hippocampus. Low levels found in molecular layer of cerebellum.

Its subcellular location is the golgi apparatus. It is found in the trans-Golgi network membrane. The protein resides in the early endosome. Component of the adaptor protein complex 4 (AP-4). Adaptor protein complexes are vesicle coat components involved both in vesicle formation and cargo selection. They control the vesicular transport of proteins in different trafficking pathways. AP-4 forms a non clathrin-associated coat on vesicles departing the trans-Golgi network (TGN) and may be involved in the targeting of proteins from the trans-Golgi network (TGN) to the endosomal-lysosomal system. It is also involved in protein sorting to the basolateral membrane in epithelial cells and the proper asymmetric localization of somatodendritic proteins in neurons. Within AP-4, the mu-type subunit AP4M1 is directly involved in the recognition and binding of tyrosine-based sorting signals found in the cytoplasmic part of cargos. The adaptor protein complex 4 (AP-4) may also recognize other types of sorting signal. This Rattus norvegicus (Rat) protein is AP-4 complex subunit mu-1.